Here is a 275-residue protein sequence, read N- to C-terminus: Small ribosomal subunit protein uS2 (275 aa).

The segment at 226 to 275 (AAAPNSASVREEEFSAEAGDEGKGRRAPAKKATEKKADAPAAAPEAPAAE) is disordered. Positions 264 to 275 (APAAAPEAPAAE) are enriched in low complexity.

This sequence belongs to the universal ribosomal protein uS2 family.

In Xanthomonas campestris pv. campestris (strain 8004), this protein is Small ribosomal subunit protein uS2.